The following is a 269-amino-acid chain: Phosphate import ATP-binding protein PstB (269 aa).

Residues 23–264 (IATRNLEFYY…PSKQQTEDYI (242 aa)) enclose the ABC transporter domain. An ATP-binding site is contributed by 55 to 62 (GPSGCGKS).

Belongs to the ABC transporter superfamily. Phosphate importer (TC 3.A.1.7) family. In terms of assembly, the complex is composed of two ATP-binding proteins (PstB), two transmembrane proteins (PstC and PstA) and a solute-binding protein (PstS).

Its subcellular location is the cell inner membrane. It catalyses the reaction phosphate(out) + ATP + H2O = ADP + 2 phosphate(in) + H(+). Its function is as follows. Part of the ABC transporter complex PstSACB involved in phosphate import. Responsible for energy coupling to the transport system. The sequence is that of Phosphate import ATP-binding protein PstB from Xylella fastidiosa (strain Temecula1 / ATCC 700964).